Here is a 147-residue protein sequence, read N- to C-terminus: Putative 2'-deoxynucleoside 5'-phosphate N-hydrolase 1 (147 aa).

Substrate is bound by residues 10–16 (YFCGSIR), Tyr25, His42, Glu90, and 114–116 (SAM).

This sequence belongs to the 2'-deoxynucleoside 5'-phosphate N-hydrolase 1 family. Monomer and homodimer.

The protein resides in the cytoplasm. Its subcellular location is the nucleus. The catalysed reaction is a pyrimidine 2'-deoxyribonucleoside 5'-phosphate + H2O = a pyrimidine nucleobase + 2-deoxy-D-ribose 5-phosphate. It catalyses the reaction a purine 2'-deoxyribonucleoside 5'-phosphate + H2O = a purine nucleobase + 2-deoxy-D-ribose 5-phosphate. Its function is as follows. Catalyzes the cleavage of the N-glycosidic bond of deoxyribonucleoside 5'-monophosphates to yield deoxyribose 5-phosphate and a purine or pyrimidine base. In Nematostella vectensis (Starlet sea anemone), this protein is Putative 2'-deoxynucleoside 5'-phosphate N-hydrolase 1.